The primary structure comprises 341 residues: Glyceraldehyde-3-phosphate dehydrogenase 2 (341 aa).

Residues 12-13 (RI), R78, and T120 each bind NAD(+). D-glyceraldehyde 3-phosphate contacts are provided by residues 152–154 (SCT) and T183. The Nucleophile role is filled by C153. NAD(+) is bound at residue N184. D-glyceraldehyde 3-phosphate-binding positions include R198, 211–212 (TG), and R234. N313 provides a ligand contact to NAD(+).

Belongs to the glyceraldehyde-3-phosphate dehydrogenase family. Homotetramer.

It localises to the cytoplasm. The enzyme catalyses D-glyceraldehyde 3-phosphate + phosphate + NAD(+) = (2R)-3-phospho-glyceroyl phosphate + NADH + H(+). It participates in carbohydrate degradation; glycolysis; pyruvate from D-glyceraldehyde 3-phosphate: step 1/5. Its function is as follows. Catalyzes the oxidative phosphorylation of glyceraldehyde 3-phosphate (G3P) to 1,3-bisphosphoglycerate (BPG) using the cofactor NAD. The first reaction step involves the formation of a hemiacetal intermediate between G3P and a cysteine residue, and this hemiacetal intermediate is then oxidized to a thioester, with concomitant reduction of NAD to NADH. The reduced NADH is then exchanged with the second NAD, and the thioester is attacked by a nucleophilic inorganic phosphate to produce BPG. The chain is Glyceraldehyde-3-phosphate dehydrogenase 2 (gapA2) from Staphylococcus aureus (strain MRSA252).